Reading from the N-terminus, the 464-residue chain is MAHVRHFRTLLSGFYFWEAALLLSLVATKETNSARSRSAPMSPSDFLDKLMGRTSGYDARIRPNFKGPPVNVTCNIFINSFGSIAETTMDYRVNIFLRQKWNDPRLAYSEYPDDSLDLDPSMLDSIWKPDLFFANEKGANFHEVTTDNKLLRIFKNGNVLYSIRLTLTLSCPMDLKNFPMDVQTCIMQLESFGYTMNDLIFEWQDEAPVQVAEGLTLPQFLLKEEKDLRYCTKHYNTGKFTCIEVRFHLERQMGYYLIQMYIPSLLIVILSWVSFWINMDAAPARVALGITTVLTMTTQSSGSRASLPKVSYVKAIDIWMAVCLLFVFSALLEYAAVNFVSRQHKELLRFRRKRKNKTEAFALEKFYRFSDTDDEVRESRLSFTAYGMGPCLQAKDGVVPKGPNHAVQVMPKSADEMRKVFIDRAKKIDTISRACFPLAFLIFNIFYWVIYKILRHEDIHHQQD.

A signal peptide spans 1 to 33 (MAHVRHFRTLLSGFYFWEAALLLSLVATKETNS). Over 34-255 (ARSRSAPMSP…RFHLERQMGY (222 aa)) the chain is Extracellular. Asn-71 carries an N-linked (GlcNAc...) asparagine glycan. Cys-171 and Cys-185 are joined by a disulfide. Residues Glu-225 and Asp-227 each coordinate Zn(2+). Cysteines 231 and 242 form a disulfide. Residue 235 to 240 (YNTGKF) participates in strychnine binding. Position 248 (His-248) interacts with Zn(2+). The helical transmembrane segment at 256–277 (YLIQMYIPSLLIVILSWVSFWI) threads the bilayer. Topologically, residues 278–282 (NMDAA) are cytoplasmic. A helical transmembrane segment spans residues 283-303 (PARVALGITTVLTMTTQSSGS). Residues 304-314 (RASLPKVSYVK) lie on the Extracellular side of the membrane. Residues 315–335 (AIDIWMAVCLLFVFSALLEYA) traverse the membrane as a helical segment. Over 336–430 (AVNFVSRQHK…FIDRAKKIDT (95 aa)) the chain is Cytoplasmic. At Ser-370 the chain carries Phosphoserine. Residue Ser-379 is modified to Phosphoserine; by PKA. A helical membrane pass occupies residues 431-451 (ISRACFPLAFLIFNIFYWVIY). The Extracellular portion of the chain corresponds to 452–464 (KILRHEDIHHQQD).

The protein belongs to the ligand-gated ion channel (TC 1.A.9) family. Glycine receptor (TC 1.A.9.3) subfamily. GLRA3 sub-subfamily. In terms of assembly, homopentamer (in vitro). Heteropentamer composed of GLRA3 and GLRB. Both homopentamers and heteropentamers form functional ion channels, but their characteristics are subtly different. Post-translationally, phosphorylated by PKA; this causes down-regulation of channel activity.

The protein resides in the postsynaptic cell membrane. It is found in the perikaryon. Its subcellular location is the cell projection. It localises to the dendrite. The protein localises to the synapse. The protein resides in the cell membrane. The catalysed reaction is chloride(in) = chloride(out). Low levels of Zn(2+) ions (1 uM) increase glycine sensitivity and decrease the glycine concentration required for half-maximal channel activity. Channel activity is strongly enhanced by ethanol. Inhibited by picrotoxin. Inhibited by prostaglandin E2, probably via PKA-mediated phosphorylation at Ser-379. Its function is as follows. Glycine receptors are ligand-gated chloride channels. Channel opening is triggered by extracellular glycine. Channel characteristics depend on the subunit composition; heteropentameric channels display faster channel closure. Plays an important role in the down-regulation of neuronal excitability. Contributes to the generation of inhibitory postsynaptic currents. Contributes to increased pain perception in response to increased prostaglandin E2 levels. Plays a role in cellular responses to ethanol. The sequence is that of Glycine receptor subunit alpha-3 (Glra3) from Rattus norvegicus (Rat).